The following is a 219-amino-acid chain: 7-cyano-7-deazaguanine synthase (219 aa).

Residue 8-18 (LSGGMDSAVLL) participates in ATP binding. 4 residues coordinate Zn(2+): Cys185, Cys193, Cys196, and Cys199.

The protein belongs to the QueC family. It depends on Zn(2+) as a cofactor.

The catalysed reaction is 7-carboxy-7-deazaguanine + NH4(+) + ATP = 7-cyano-7-deazaguanine + ADP + phosphate + H2O + H(+). The protein operates within purine metabolism; 7-cyano-7-deazaguanine biosynthesis. Functionally, catalyzes the ATP-dependent conversion of 7-carboxy-7-deazaguanine (CDG) to 7-cyano-7-deazaguanine (preQ(0)). The sequence is that of 7-cyano-7-deazaguanine synthase from Desulfotalea psychrophila (strain LSv54 / DSM 12343).